Consider the following 463-residue polypeptide: Glutamate--tRNA ligase 2 (463 aa).

Residues 10 to 20 (PSPTGYLHIGG) carry the 'HIGH' region motif. The 'KMSKS' region signature appears at 238-242 (KLSKR). ATP is bound at residue K241.

This sequence belongs to the class-I aminoacyl-tRNA synthetase family. Glutamate--tRNA ligase type 1 subfamily. As to quaternary structure, monomer.

It localises to the cytoplasm. It catalyses the reaction tRNA(Glu) + L-glutamate + ATP = L-glutamyl-tRNA(Glu) + AMP + diphosphate. Catalyzes the attachment of glutamate to tRNA(Glu) in a two-step reaction: glutamate is first activated by ATP to form Glu-AMP and then transferred to the acceptor end of tRNA(Glu). In Helicobacter acinonychis (strain Sheeba), this protein is Glutamate--tRNA ligase 2.